The primary structure comprises 461 residues: Cysteine--tRNA ligase (461 aa).

Zn(2+) is bound at residue cysteine 28. Residues 30 to 40 (VTIYDLCHIGH) carry the 'HIGH' region motif. Zn(2+) contacts are provided by cysteine 209, histidine 234, and glutamate 238. Residues 266-270 (KMSKS) carry the 'KMSKS' region motif. Lysine 269 contacts ATP.

It belongs to the class-I aminoacyl-tRNA synthetase family. As to quaternary structure, monomer. Zn(2+) is required as a cofactor.

The protein resides in the cytoplasm. It carries out the reaction tRNA(Cys) + L-cysteine + ATP = L-cysteinyl-tRNA(Cys) + AMP + diphosphate. This chain is Cysteine--tRNA ligase, found in Serratia proteamaculans (strain 568).